Reading from the N-terminus, the 277-residue chain is MNVINGKKIAQNLQASIKLKVDTLDRKPGLAVILVGDDDASEVYIRNKEDACKEVGFYLEIINRFDNISQEELLFEIERLNHDDKIDGILVQLPLPKHLDVNLVIETISPKKDVDGFHSENIGKLMQNKPFLHPCTPKGVMLMLESIEIDLVGKNCVVVGASNIVGRPMACELLNAKATVTICNSKTKNLSCKLIQADIVVVAVGIPKMIQSDWIKPGAIVIDVGINRLDNGCLVGDVDFESVRKVAGWIAPVPGGVGPMTIATLLKNTLTAYEARI.

NADP(+)-binding positions include 160-162, Ser-185, and Ile-226; that span reads GAS.

Belongs to the tetrahydrofolate dehydrogenase/cyclohydrolase family. Homodimer.

The enzyme catalyses (6R)-5,10-methylene-5,6,7,8-tetrahydrofolate + NADP(+) = (6R)-5,10-methenyltetrahydrofolate + NADPH. It carries out the reaction (6R)-5,10-methenyltetrahydrofolate + H2O = (6R)-10-formyltetrahydrofolate + H(+). The protein operates within one-carbon metabolism; tetrahydrofolate interconversion. Catalyzes the oxidation of 5,10-methylenetetrahydrofolate to 5,10-methenyltetrahydrofolate and then the hydrolysis of 5,10-methenyltetrahydrofolate to 10-formyltetrahydrofolate. In Vesicomyosocius okutanii subsp. Calyptogena okutanii (strain HA), this protein is Bifunctional protein FolD.